Reading from the N-terminus, the 159-residue chain is Ribonuclease H (159 aa).

The RNase H type-1 domain occupies 1-142; it reads MHKQVEIFTD…CDELAKAAAQ (142 aa). Mg(2+) contacts are provided by Asp10, Glu48, Asp70, and Asp134. The disordered stretch occupies residues 135-159; that stretch reads ELAKAAAQSPTKEDTGYLESQQDKT. A compositionally biased stretch (basic and acidic residues) spans 145 to 159; that stretch reads TKEDTGYLESQQDKT.

It belongs to the RNase H family. As to quaternary structure, monomer. The cofactor is Mg(2+).

Its subcellular location is the cytoplasm. The catalysed reaction is Endonucleolytic cleavage to 5'-phosphomonoester.. Its function is as follows. Endonuclease that specifically degrades the RNA of RNA-DNA hybrids. This is Ribonuclease H from Proteus mirabilis (strain HI4320).